Reading from the N-terminus, the 330-residue chain is Probable aldo-keto reductase 6 (330 aa).

The active-site Proton donor is Tyr64. Substrate is bound at residue His132. NADP(+) is bound at residue 211 to 221 (SPLGRGFLGLP).

This sequence belongs to the aldo/keto reductase family.

This chain is Probable aldo-keto reductase 6, found in Arabidopsis thaliana (Mouse-ear cress).